A 342-amino-acid chain; its full sequence is Nucleoid-associated protein Shewana3_2426 (342 aa).

The protein belongs to the YejK family.

The protein localises to the cytoplasm. The protein resides in the nucleoid. The protein is Nucleoid-associated protein Shewana3_2426 of Shewanella sp. (strain ANA-3).